The sequence spans 642 residues: Threonine--tRNA ligase (642 aa).

The region spanning 1-61 is the TGS domain; sequence MPVITLPDGS…ENDAQLSIIT (61 aa). The interval 243–534 is catalytic; the sequence is DHRKIGKQLD…LTEEFAGFFP (292 aa). At Lys286 the chain carries N6-acetyllysine. Residues Cys334, His385, and His511 each coordinate Zn(2+).

This sequence belongs to the class-II aminoacyl-tRNA synthetase family. Homodimer. It depends on Zn(2+) as a cofactor.

It is found in the cytoplasm. It carries out the reaction tRNA(Thr) + L-threonine + ATP = L-threonyl-tRNA(Thr) + AMP + diphosphate + H(+). Its function is as follows. Catalyzes the attachment of threonine to tRNA(Thr) in a two-step reaction: L-threonine is first activated by ATP to form Thr-AMP and then transferred to the acceptor end of tRNA(Thr). Also edits incorrectly charged L-seryl-tRNA(Thr). The polypeptide is Threonine--tRNA ligase (Escherichia coli O8 (strain IAI1)).